Reading from the N-terminus, the 556-residue chain is 2-succinyl-5-enolpyruvyl-6-hydroxy-3-cyclohexene-1-carboxylate synthase (556 aa).

It belongs to the TPP enzyme family. MenD subfamily. Homodimer. It depends on Mg(2+) as a cofactor. The cofactor is Mn(2+). Requires thiamine diphosphate as cofactor.

It catalyses the reaction isochorismate + 2-oxoglutarate + H(+) = 5-enolpyruvoyl-6-hydroxy-2-succinyl-cyclohex-3-ene-1-carboxylate + CO2. Its pathway is quinol/quinone metabolism; 1,4-dihydroxy-2-naphthoate biosynthesis; 1,4-dihydroxy-2-naphthoate from chorismate: step 2/7. It functions in the pathway quinol/quinone metabolism; menaquinone biosynthesis. Functionally, catalyzes the thiamine diphosphate-dependent decarboxylation of 2-oxoglutarate and the subsequent addition of the resulting succinic semialdehyde-thiamine pyrophosphate anion to isochorismate to yield 2-succinyl-5-enolpyruvyl-6-hydroxy-3-cyclohexene-1-carboxylate (SEPHCHC). The polypeptide is 2-succinyl-5-enolpyruvyl-6-hydroxy-3-cyclohexene-1-carboxylate synthase (Salmonella typhi).